Reading from the N-terminus, the 262-residue chain is 1-(5-phosphoribosyl)-5-[(5-phosphoribosylamino)methylideneamino] imidazole-4-carboxamide isomerase (262 aa).

The active-site Proton acceptor is the aspartate 8. Aspartate 129 functions as the Proton donor in the catalytic mechanism. The tract at residues 243 to 262 is disordered; that stretch reads KDNVGQEDHSLPRCEPGPRG.

Belongs to the HisA/HisF family.

It is found in the cytoplasm. The enzyme catalyses 1-(5-phospho-beta-D-ribosyl)-5-[(5-phospho-beta-D-ribosylamino)methylideneamino]imidazole-4-carboxamide = 5-[(5-phospho-1-deoxy-D-ribulos-1-ylimino)methylamino]-1-(5-phospho-beta-D-ribosyl)imidazole-4-carboxamide. It functions in the pathway amino-acid biosynthesis; L-histidine biosynthesis; L-histidine from 5-phospho-alpha-D-ribose 1-diphosphate: step 4/9. The polypeptide is 1-(5-phosphoribosyl)-5-[(5-phosphoribosylamino)methylideneamino] imidazole-4-carboxamide isomerase (Desulforudis audaxviator (strain MP104C)).